The sequence spans 427 residues: 3-phosphoshikimate 1-carboxyvinyltransferase (427 aa).

3-phosphoshikimate-binding residues include Lys-20, Ser-21, and Arg-25. Lys-20 contributes to the phosphoenolpyruvate binding site. Gly-92 and Arg-120 together coordinate phosphoenolpyruvate. 3-phosphoshikimate-binding residues include Ser-166, Gln-168, Asp-312, and Lys-339. Phosphoenolpyruvate is bound at residue Gln-168. Catalysis depends on Asp-312, which acts as the Proton acceptor. Phosphoenolpyruvate-binding residues include Arg-343 and Arg-385.

Belongs to the EPSP synthase family. As to quaternary structure, monomer.

The protein localises to the cytoplasm. The enzyme catalyses 3-phosphoshikimate + phosphoenolpyruvate = 5-O-(1-carboxyvinyl)-3-phosphoshikimate + phosphate. It participates in metabolic intermediate biosynthesis; chorismate biosynthesis; chorismate from D-erythrose 4-phosphate and phosphoenolpyruvate: step 6/7. Functionally, catalyzes the transfer of the enolpyruvyl moiety of phosphoenolpyruvate (PEP) to the 5-hydroxyl of shikimate-3-phosphate (S3P) to produce enolpyruvyl shikimate-3-phosphate and inorganic phosphate. The chain is 3-phosphoshikimate 1-carboxyvinyltransferase from Streptococcus uberis (strain ATCC BAA-854 / 0140J).